The following is a 98-amino-acid chain: Large ribosomal subunit protein uL23 (98 aa).

It belongs to the universal ribosomal protein uL23 family. In terms of assembly, part of the 50S ribosomal subunit. Contacts protein L29, and trigger factor when it is bound to the ribosome.

Functionally, one of the early assembly proteins it binds 23S rRNA. One of the proteins that surrounds the polypeptide exit tunnel on the outside of the ribosome. Forms the main docking site for trigger factor binding to the ribosome. In Rickettsia peacockii (strain Rustic), this protein is Large ribosomal subunit protein uL23.